We begin with the raw amino-acid sequence, 96 residues long: UPF0235 protein VV2877 (96 aa).

It belongs to the UPF0235 family.

The chain is UPF0235 protein VV2877 from Vibrio vulnificus (strain YJ016).